A 141-amino-acid chain; its full sequence is Large-conductance mechanosensitive channel (141 aa).

A run of 3 helical transmembrane segments spans residues 14 to 34, 38 to 58, and 81 to 101; these read VMDLAVGVIIGGAFGGIVKSL, IIMPIVGAIFGGFDFSNYFLG, and GSFITVLINFLILAWIIFLMV.

Belongs to the MscL family. In terms of assembly, homopentamer.

It localises to the cell inner membrane. Functionally, channel that opens in response to stretch forces in the membrane lipid bilayer. May participate in the regulation of osmotic pressure changes within the cell. This chain is Large-conductance mechanosensitive channel, found in Rhizobium rhizogenes (strain K84 / ATCC BAA-868) (Agrobacterium radiobacter).